Reading from the N-terminus, the 205-residue chain is ATP-dependent Clp protease proteolytic subunit (205 aa).

The Nucleophile role is filled by S107. Residue H132 is part of the active site.

It belongs to the peptidase S14 family. In terms of assembly, fourteen ClpP subunits assemble into 2 heptameric rings which stack back to back to give a disk-like structure with a central cavity, resembling the structure of eukaryotic proteasomes.

It localises to the cytoplasm. It carries out the reaction Hydrolysis of proteins to small peptides in the presence of ATP and magnesium. alpha-casein is the usual test substrate. In the absence of ATP, only oligopeptides shorter than five residues are hydrolyzed (such as succinyl-Leu-Tyr-|-NHMec, and Leu-Tyr-Leu-|-Tyr-Trp, in which cleavage of the -Tyr-|-Leu- and -Tyr-|-Trp bonds also occurs).. Functionally, cleaves peptides in various proteins in a process that requires ATP hydrolysis. Has a chymotrypsin-like activity. Plays a major role in the degradation of misfolded proteins. The protein is ATP-dependent Clp protease proteolytic subunit of Pseudoalteromonas translucida (strain TAC 125).